We begin with the raw amino-acid sequence, 215 residues long: High mobility group protein B1 (215 aa).

A DNA-binding region (HMG box 1) is located at residues 9–79; the sequence is PRGKMSSYAF…RYEKEMKNYV (71 aa). Cysteine 23 is modified (cysteine sulfonic acid (-SO3H); alternate). Cysteines 23 and 45 form a disulfide. Residues 27–43 form an NLS 1 region; it reads HKKKHPDASVNFSEFSK. The short motif at 27–43 is the Nuclear localization signal (NLS) 1 element; it reads HKKKHPDASVNFSEFSK. Position 45 is a cysteine sulfonic acid (-SO3H); alternate (cysteine 45). Residues 75 to 95 are disordered; the sequence is MKNYVPPKGETKKKFKDPNAP. Positions 83 to 94 are enriched in basic and acidic residues; that stretch reads GETKKKFKDPNA. Positions 95–163 form a DNA-binding region, HMG box 2; sequence PKRPPSAFFL…KYEKDIAAYR (69 aa). Residue cysteine 106 is modified to Cysteine sulfonic acid (-SO3H). Residues 166–179 show a composition bias toward basic and acidic residues; the sequence is GKVDAGKKVVAKAE. The disordered stretch occupies residues 166–215; it reads GKVDAGKKVVAKAEKSKKKKEEEEDEDEDEEDEEDEEEEEEEEEDDDDDE. The NLS 2 stretch occupies residues 178-184; that stretch reads AEKSKKK. The Nuclear localization signal (NLS) 2 motif lies at 178–184; sequence AEKSKKK. The span at 187–215 shows a compositional bias: acidic residues; the sequence is EEEDEDEDEEDEEDEEEEEEEEEDDDDDE. The interval 196-210 is involved in intramolecular interaction with K-3; the sequence is EDEEDEEEEEEEEED. An involved in interaction with histone H3 region spans residues 211–215; sequence DDDDE.

It belongs to the HMGB family. Reduction/oxidation of cysteine residues Cys-23, Cys-45 and Cys-106 and a possible intramolecular disulfide bond involving Cys-23 and Cys-45 give rise to different redox forms with specific functional activities: 1- fully reduced HMGB1 (HMGB1C23hC45hC106h), 2- disulfide HMGB1 (HMGB1C23-C45C106h) and 3- sulfonyl HMGB1 (HMGB1C23soC45soC106so).

The protein resides in the nucleus. The protein localises to the chromosome. It localises to the cytoplasm. It is found in the secreted. Its function is as follows. Multifunctional redox sensitive protein with various roles in different cellular compartments. Nuclear functions are attributed to fully reduced HGMB1. Associates with chromatin and binds DNA with a preference to non-canonical DNA structures such as single-stranded DNA, DNA-containing cruciforms or bent structures, supercoiled DNA and ZDNA. Can bent DNA and enhance DNA flexibility by looping thus providing a mechanism to promote activities on various gene promoters. Can restructure the canonical nucleosome. Proposed to be an universal biosensor for nucleic acids. May promote inflammatory response to sterile and infectious signals and may be involved in the coordination and integration of innate and adaptive immune responses. In the cytoplasm may function as sensor and/or chaperone for immunogenic nucleic acids, and mediate autophagy. May act as danger associated molecular pattern (DAMP) molecule that amplifies immune responses during tissue injury. The polypeptide is High mobility group protein B1 (HMGB1) (Gallus gallus (Chicken)).